We begin with the raw amino-acid sequence, 875 residues long: Probable dipeptidyl-aminopeptidase B (875 aa).

Positions 1–90 are disordered; that stretch reads MSEPKPIQDT…ASSETTPPRK (90 aa). At 1-98 the chain is on the cytoplasmic side; the sequence is MSEPKPIQDT…RKGVDRKLKK (98 aa). A compositionally biased stretch (low complexity) spans 19–28; the sequence is SSISSASTTS. A compositionally biased stretch (basic and acidic residues) spans 33–46; the sequence is RLAEESEKNHDASS. A helical; Signal-anchor for type II membrane protein transmembrane segment spans residues 99 to 119; it reads VLLIVGGFFVAAWIVSLVVFL. Residues 120 to 875 lie on the Vacuolar side of the membrane; that stretch reads TNKSYKHGSQ…VNDAKPKIES (756 aa). N-linked (GlcNAc...) asparagine glycans are attached at residues asparagine 354 and asparagine 567. The interval 689–715 is disordered; it reads VDFQSSDGGRRTTRSPRRATGRPSATS. Residues 699 to 708 are compositionally biased toward basic residues; that stretch reads RTTRSPRRAT. Serine 726 acts as the Charge relay system in catalysis. Asparagine 785 carries N-linked (GlcNAc...) asparagine glycosylation. Residues aspartate 803 and histidine 836 each act as charge relay system in the active site.

Belongs to the peptidase S9B family.

It localises to the vacuole membrane. It catalyses the reaction Release of an N-terminal dipeptide, Xaa-Yaa-|-Zaa-, from a polypeptide, preferentially when Yaa is Pro, provided Zaa is neither Pro nor hydroxyproline.. In terms of biological role, type IV dipeptidyl-peptidase which removes N-terminal dipeptides sequentially from polypeptides having unsubstituted N-termini provided that the penultimate residue is proline. In Verticillium alfalfae (strain VaMs.102 / ATCC MYA-4576 / FGSC 10136) (Verticillium wilt of alfalfa), this protein is Probable dipeptidyl-aminopeptidase B (DAPB).